Consider the following 329-residue polypeptide: Trans-1,2-dihydrobenzene-1,2-diol dehydrogenase (329 aa).

This sequence belongs to the Gfo/Idh/MocA family. In terms of assembly, homodimer. Lens, liver and small intestine.

The enzyme catalyses (1R,2R)-1,2-dihydrobenzene-1,2-diol + NADP(+) = catechol + NADPH + H(+). It carries out the reaction D-xylose + NADP(+) = D-xylono-1,5-lactone + NADPH + H(+). Its activity is regulated as follows. Stimulated by various salts. In Oryctolagus cuniculus (Rabbit), this protein is Trans-1,2-dihydrobenzene-1,2-diol dehydrogenase (DHDH).